A 616-amino-acid chain; its full sequence is Probable Xaa-Pro aminopeptidase P (616 aa).

Positions 413, 424, 522, and 536 each coordinate Mn(2+).

This sequence belongs to the peptidase M24B family. Mn(2+) serves as cofactor.

It catalyses the reaction Release of any N-terminal amino acid, including proline, that is linked to proline, even from a dipeptide or tripeptide.. Catalyzes the removal of a penultimate prolyl residue from the N-termini of peptides. This chain is Probable Xaa-Pro aminopeptidase P (AMPP), found in Paracoccidioides brasiliensis (strain Pb03).